The chain runs to 439 residues: Vacuolar protein sorting-associated protein 4 (439 aa).

The MIT domain occupies 8–75; that stretch reads LSKGIDLVQK…TRAEQLKDHL (68 aa). The tract at residues 76-113 is disordered; that stretch reads EKQAQNKSTAESSVNGSTKAKKSNGDGNGSGDDNDDAD. The segment covering 80 to 93 has biased composition (polar residues); the sequence is QNKSTAESSVNGST. Residue 175 to 182 coordinates ATP; the sequence is GPPGTGKS.

This sequence belongs to the AAA ATPase family. As to quaternary structure, monomer or homodimer (in nucleotide-free form). Decamer, dodecamer or tetradecamer of two stacked respective homooligomeric rings (when bound to ATP); the dodecameric form seems to be predominant.

The protein localises to the endosome membrane. Its function is as follows. Pre-vacuolar protein sorting protein involved in the transport of biosynthetic membrane proteins from the prevacuolar/endosomal compartment to the vacuole. Required for multivesicular body (MVB) protein sorting. Catalyzes the ATP-dependent dissociation of class E VPS proteins from endosomal membranes, such as the disassembly of the ESCRT-III complex. Required for extracellular secretion of the secreted aspartyl proteases SAP2, SAP4, SAP5, and SAP6. Its regulation of the pre-vacuolar secretory pathway is critical for virulence. In Candida albicans (strain SC5314 / ATCC MYA-2876) (Yeast), this protein is Vacuolar protein sorting-associated protein 4.